Here is a 561-residue protein sequence, read N- to C-terminus: MKRPKLKKASKRLSCAKRYKIQKKVREHNRKLKKAAKKQGISRKAKKDIGVPNSAPFKEEVLREAEQRKQELETLKEQNKIVKQQEKAAKRKKEKDAASSVKEPAAKKAKKAAKIKEARAAIVKVKSAKTFKCQELNKVIEASDVIVEVLDARDPLGCRCPQLEEMVLKHEGKKKLLFILNKIDLVPKDNLEKWLHFLEAECPTFLFKSSMQLKDRTVQQKRQQRGTNAVLDHSRAASCFGKDFLLQTLNDLANKKEGETMLKVGVVGFPNVGKSSIINSLKEMRACNAGVQRGLTRCMQEVHITKKVKMIDSPGILAALSNPGSAMALRSLQVEEKEESPQEAVRNLLKQCNQQHVMLQYNVPDYRSSLEFLTTFAMKHGLLQKGGVADTELAATTFLNDWTGAKLSYYSRVPERQGLPSYLSDAIVTELQSDVDMDAVKKGNENVKRSVRFPNLASCISFDSSGPTAGVLDVSELPKEILTKAATTTDAEEEKMDTTTNTDEPEAESHISSTVEPIQEPTEKRKDKPAKEVKFVPVNTDLTSMQNKNNEDAYDFNTDFV.

Residues 28-46 (HNRKLKKAAKKQGISRKAK) show a composition bias toward basic residues. 2 disordered regions span residues 28–58 (HNRK…APFK) and 76–110 (KEQN…KKAK). Positions 53-98 (NSAPFKEEVLREAEQRKQELETLKEQNKIVKQQEKAAKRKKEKDAA) form a coiled coil. Over residues 76–88 (KEQNKIVKQQEKA) the composition is skewed to basic and acidic residues. Residues 133 to 319 (CQELNKVIEA…MIDSPGILAA (187 aa)) form the CP-type G domain. Residues 181–184 (NKID), 268–275 (GFPNVGKS), and 312–315 (DSPG) contribute to the GTP site. Positions 486–532 (ATTTDAEEEKMDTTTNTDEPEAESHISSTVEPIQEPTEKRKDKPAKE) are disordered. Residues 521 to 532 (PTEKRKDKPAKE) are compositionally biased toward basic and acidic residues.

The protein belongs to the TRAFAC class YlqF/YawG GTPase family.

The protein resides in the nucleus. Its subcellular location is the nucleolus. May play a role in regulating cellular proliferation. The sequence is that of Guanine nucleotide-binding protein-like 3 (gnl3) from Danio rerio (Zebrafish).